The primary structure comprises 123 residues: Large ribosomal subunit protein uL14 (123 aa).

The protein belongs to the universal ribosomal protein uL14 family. As to quaternary structure, part of the 50S ribosomal subunit. Forms a cluster with proteins L3 and L19. In the 70S ribosome, L14 and L19 interact and together make contacts with the 16S rRNA in bridges B5 and B8.

Functionally, binds to 23S rRNA. Forms part of two intersubunit bridges in the 70S ribosome. The chain is Large ribosomal subunit protein uL14 from Wigglesworthia glossinidia brevipalpis.